We begin with the raw amino-acid sequence, 166 residues long: tRNA-acetylating toxin (166 aa).

Residues 1-22 (MSGYSAPRRISDADDVTSFSSG) are disordered. In terms of domain architecture, N-acetyltransferase spans 1–162 (MSGYSAPRRI…LMLLMKDARA (162 aa)). Residue Y138 is part of the active site.

The protein belongs to the acetyltransferase family. GNAT subfamily. As to quaternary structure, homodimer, forms a complex with cognate antitoxin TacA.

It carries out the reaction glycyl-tRNA(Gly) + acetyl-CoA = N-acetylglycyl-tRNA(Gly) + CoA + H(+). Toxic component of a type II toxin-antitoxin (TA) system. Overexpression of this gene alone in M.smegmatis inhibits growth, while overexpression of the tacA-tacT operon does not. Acetylates glycyl-tRNA(Gly) but not other tRNAs, blocks in vitro translation in the presence, but not absence, of acetyl-coenzyme A. Peptidyl-tRNA hydrolase (pth) counteracts the product of this enzyme in vitro. Neutralized by cognate antitoxin TacA. Does not seem to be active in laboratory growth conditions. In terms of biological role, tacA-TacT both represses and derepresses expression of its own operon. This Mycobacterium tuberculosis (strain ATCC 25618 / H37Rv) protein is tRNA-acetylating toxin.